A 717-amino-acid chain; its full sequence is Cleavage stimulation factor subunit 3 (717 aa).

Ser2 carries the N-acetylserine modification. HAT repeat units lie at residues 45–77 (QPIDKARKTYERLVAQFPSSGRFWKLYIEAEIK), 79–110 (KNYDKVEKLFQRCLMKVLHIDLWKCYLSYVRE), 117–152 (SYKEKMAQAYDFALDKIGMEIMSYQIWVDYINFLKG), 163–196 (QRITAVRRVYQRGCVNPMINIEQLWRDYNKYEEG), 221–261 (KEYE…WEKS), 271–303 (LITKRVMFAYEQCLLVLGHHPDIWYEAAQYLEQ), 319–352 (LFSDEAANIYERAISTLLKKNMLLYFAYADYEES), 354–387 (MKYEKVHSIYNRLLAIEDIDPTLVYIQYMKFARR), and 458–494 (NEDNNTRVLFERVLTSGSLPPEKSGEIWARFLAFESN). The disordered stretch occupies residues 683–704 (AVKRPNEDSDEDEEKGAVVPPV). Ser691 is subject to Phosphoserine.

In terms of assembly, homodimer. The CSTF complex is composed of CSTF1 (50 kDa subunit), CSTF2 (64 kDa subunit) and CSTF3 (77 kDa subunit). CSTF3 directly interacts with CSTF1 and CSTF2. Interacts with FIP1L1.

The protein localises to the nucleus. Functionally, one of the multiple factors required for polyadenylation and 3'-end cleavage of mammalian pre-mRNAs. The chain is Cleavage stimulation factor subunit 3 (Cstf3) from Mus musculus (Mouse).